The primary structure comprises 557 residues: Nucleoprotein (557 aa).

A binding site for the cap structure m7GTP region spans residues 54-235; it reads MRKDKRSDDD…ITKEESANNI (182 aa). 2 residues coordinate Mn(2+): Asp-379 and Glu-381. Positions 389, 496, 499, and 518 each coordinate Zn(2+). Asp-522 is a binding site for Mn(2+).

Belongs to the arenaviridae nucleocapsid protein family. In terms of assembly, homomultimerizes to form the nucleocapsid. Binds to viral genomic RNA. Interacts with glycoprotein G2. Interacts with protein Z; this interaction probably directs the encapsidated genome to budding sites. Interacts with protein L; this interaction does not interfere with Z-L interaction. Interacts with host IKBKE (via Protein kinase domain); the interaction inhibits IKBKE kinase activity.

The protein localises to the virion. Its subcellular location is the host cytoplasm. Its function is as follows. Encapsidates the genome, protecting it from nucleases. The encapsidated genomic RNA is termed the nucleocapsid (NC). Serves as template for viral transcription and replication. The increased presence of protein N in host cell does not seem to trigger the switch from transcription to replication as observed in other negative strain RNA viruses. Through the interaction with host IKBKE, strongly inhibits the phosphorylation and nuclear translocation of host IRF3, a protein involved in interferon activation pathway, leading to the inhibition of interferon-beta and IRF3-dependent promoters activation. Also encodes a functional 3'-5' exoribonuclease that degrades preferentially dsRNA substrates and thereby participates in the suppression of interferon induction. The chain is Nucleoprotein from Calomys callosus (Large vesper mouse).